The primary structure comprises 882 residues: Probable LRR receptor-like serine/threonine-protein kinase At1g12460 (882 aa).

Positions 1-21 are cleaved as a signal peptide; sequence MRKVHLFLVLVHFIYISTSRS. At 22-515 the chain is on the extracellular side; the sequence is DSISERDILL…SRNSDALSIS (494 aa). Asparagine 76 carries an N-linked (GlcNAc...) asparagine glycan. 16 LRR repeats span residues 92-113, 116-138, 140-162, 165-187, 189-210, 213-235, 237-258, 261-283, 285-308, 309-331, 333-355, 357-379, 381-404, 405-427, 429-451, and 453-475; these read FIRV…DYFK, TLWT…ISEL, SLRF…LFKF, KTKF…IVNC, NLVG…RICD, VLEY…IQKC, RLIL…AVLT, NITY…VDCS, SLEF…MGCK, SLKL…IGKM, SLSV…IGSL, FLQV…ISNC, VLLE…LNLT, NIKI…LGNL, KVQF…LGSL, and TLTH…PMIQ. N-linked (GlcNAc...) asparagine glycosylation occurs at asparagine 121. N-linked (GlcNAc...) asparagine glycosylation is found at asparagine 261 and asparagine 266. Residues asparagine 321 and asparagine 341 are each glycosylated (N-linked (GlcNAc...) asparagine). N-linked (GlcNAc...) asparagine glycans are attached at residues asparagine 402, asparagine 417, and asparagine 426. Residues asparagine 458 and asparagine 463 are each glycosylated (N-linked (GlcNAc...) asparagine). The helical transmembrane segment at 516-536 threads the bilayer; the sequence is VIIVIIAAAVILFGVCIVLAL. Residues 537 to 882 are Cytoplasmic-facing; the sequence is NLRARKRRKD…LESIRNGFGS (346 aa). A Phosphothreonine modification is found at threonine 589. Residues 593 to 876 form the Protein kinase domain; it reads LDKENIIGMG…AEVVQVLESI (284 aa). ATP-binding positions include 599-607 and lysine 621; that span reads IGMGSIGSV. At tyrosine 770 the chain carries Phosphotyrosine.

This sequence belongs to the protein kinase superfamily. Ser/Thr protein kinase family.

The protein localises to the cell membrane. The enzyme catalyses L-seryl-[protein] + ATP = O-phospho-L-seryl-[protein] + ADP + H(+). It catalyses the reaction L-threonyl-[protein] + ATP = O-phospho-L-threonyl-[protein] + ADP + H(+). The sequence is that of Probable LRR receptor-like serine/threonine-protein kinase At1g12460 from Arabidopsis thaliana (Mouse-ear cress).